Reading from the N-terminus, the 381-residue chain is O-phospho-L-seryl-tRNA:Cys-tRNA synthase (381 aa).

Pyridoxal 5'-phosphate-binding positions include 86–87 (AR), Asn-192, and 215–217 (SGH). The residue at position 218 (Lys-218) is an N6-(pyridoxal phosphate)lysine.

Belongs to the SepCysS family. In terms of assembly, homodimer. Interacts with SepRS. Pyridoxal 5'-phosphate serves as cofactor.

The catalysed reaction is O-phospho-L-seryl-tRNA(Cys) + hydrogen sulfide + H(+) = L-cysteinyl-tRNA(Cys) + phosphate. Its function is as follows. Converts O-phospho-L-seryl-tRNA(Cys) (Sep-tRNA(Cys)) to L-cysteinyl-tRNA(Cys) (Cys-tRNA(Cys)). This is O-phospho-L-seryl-tRNA:Cys-tRNA synthase from Methanococcus vannielii (strain ATCC 35089 / DSM 1224 / JCM 13029 / OCM 148 / SB).